Consider the following 251-residue polypeptide: Hydroxyacylglutathione hydrolase GloB (251 aa).

Residues His-53, His-55, Asp-57, His-58, His-110, and Asp-127 each contribute to the Zn(2+) site. Substrate contacts are provided by residues Arg-136–Phe-138, His-165–Tyr-167, and Arg-245–Lys-248. His-165 lines the Zn(2+) pocket.

The protein belongs to the metallo-beta-lactamase superfamily. Glyoxalase II family. In terms of assembly, monomer. Requires Zn(2+) as cofactor.

It carries out the reaction an S-(2-hydroxyacyl)glutathione + H2O = a 2-hydroxy carboxylate + glutathione + H(+). The enzyme catalyses (R)-S-lactoylglutathione + H2O = (R)-lactate + glutathione + H(+). Its pathway is secondary metabolite metabolism; methylglyoxal degradation; (R)-lactate from methylglyoxal: step 2/2. Its activity is regulated as follows. Is inhibited by Cu(2+). In terms of biological role, type II glyoxalase that catalyzes the hydrolysis of (R)-S-lactoylglutathione to (R)-lactate and glutathione. Is more efficient than the isozyme GloC, and plays a major contribution to methylglyoxal (MG) detoxification in E.coli. The two isoenzymes have additive effects and ensure maximal MG degradation. This Escherichia coli (strain K12) protein is Hydroxyacylglutathione hydrolase GloB.